Reading from the N-terminus, the 649-residue chain is Extracellular metalloproteinase 4 (649 aa).

Positions 1-18 (MHGLLLAGLLALPSNVLG) are cleaved as a signal peptide. Positions 19–260 (HPAEPPNSVN…VHGVVDYVAS (242 aa)) are excised as a propeptide. His-443 provides a ligand contact to Zn(2+). Glu-444 is an active-site residue. His-447 provides a ligand contact to Zn(2+). Residues Asn-494 and Asn-609 are each glycosylated (N-linked (GlcNAc...) asparagine).

The protein belongs to the peptidase M36 family. Zn(2+) is required as a cofactor.

The protein localises to the secreted. Secreted metalloproteinase probably acting as a virulence factor. This is Extracellular metalloproteinase 4 (MEP4) from Arthroderma otae (strain ATCC MYA-4605 / CBS 113480) (Microsporum canis).